The following is a 619-amino-acid chain: Cationic amino acid transporter 3 (619 aa).

Residues 1–36 lie on the Cytoplasmic side of the membrane; that stretch reads MLWQALRRFGQKLVRRRLLELGMGETRLARCLSTLD. Residues 37–57 form a helical membrane-spanning segment; that stretch reads LVALGVGSTLGAGVYVLAGEV. Over 58-61 the chain is Extracellular; sequence AKEK. The helical transmembrane segment at 62-82 threads the bilayer; that stretch reads AGPSIVICFLVAALSSVLAGL. Over 83–107 the chain is Cytoplasmic; the sequence is CYAEFGARVPGSGSAYLYSYVTVGE. A helical transmembrane segment spans residues 108–128; the sequence is LWAFTTGWNLILSYVIGTASV. The Extracellular segment spans residues 129-162; it reads ARAWSSAFDNLIGNHISQTLKGTILLNMPHVLAE. A helical transmembrane segment spans residues 163–183; it reads YPDFFALALVLLLTGLLVLGA. Residues 184–191 lie on the Cytoplasmic side of the membrane; that stretch reads NESGLVTK. A helical transmembrane segment spans residues 192–212; it reads VFTGMNLLVLGFVIISGFIKG. Topologically, residues 213-244 are extracellular; that stretch reads ELRNWKLTKEDYCLTMSESNGTCSLDSMGSGG. Asn-232 carries an N-linked (GlcNAc...) asparagine glycan. Residues 245 to 265 form a helical membrane-spanning segment; sequence FMPFGLEGILRGAATCFYAFV. Residues 266 to 285 are Cytoplasmic-facing; that stretch reads GFDCIATTGEEAQNPQRSIP. A helical membrane pass occupies residues 286–306; sequence MGIVISLSICFLAYFGVSSAL. At 307 to 335 the chain is on the extracellular side; the sequence is TLMMPYYKLQPESPLPEAFTYVGWEPARY. The helical transmembrane segment at 336–356 threads the bilayer; sequence LVAIGSLCALSTSLLGSMFPM. Residues 357-382 lie on the Cytoplasmic side of the membrane; the sequence is PRVIYAMAEDGLLFRVLARVHNGTHT. The helical transmembrane segment at 383–403 threads the bilayer; that stretch reads PIVATVVSGVIAAFMAFLFEL. Residues 404-406 lie on the Extracellular side of the membrane; the sequence is TDL. A helical membrane pass occupies residues 407-427; sequence VDLMSIGTLLAYSLVSICVLI. Over 428 to 475 the chain is Cytoplasmic; the sequence is LRYQPDQEMKNGEEEVELQEERTLEAEKLTVQALFCQVDSIPTLLSGR. A helical membrane pass occupies residues 476–496; the sequence is IVYVCSSLLAVLLTVLCLVLT. The Extracellular segment spans residues 497–507; the sequence is WWTTPLHSGDP. Residues 508-528 traverse the membrane as a helical segment; it reads VWVTVVVLILGLILGISGVIW. Over 529-540 the chain is Cytoplasmic; sequence RQPQNRTPLHFK. The helical transmembrane segment at 541–561 threads the bilayer; the sequence is VPVVPLLPLVSIFVNVYLMMQ. Topologically, residues 562–569 are extracellular; the sequence is MTADTWAR. A helical transmembrane segment spans residues 570–590; it reads FGVWMLIGFAIYFGYGIQHSV. Over 591–619 the chain is Cytoplasmic; it reads EEVKNHQTLPKTRPQTIDLDLTTSCVHSI. A Phosphothreonine modification is found at Thr-606. Ser-618 is modified (phosphoserine).

Belongs to the amino acid-polyamine-organocation (APC) superfamily. Cationic amino acid transporter (CAT) (TC 2.A.3.3) family. N-glycosylated. As to expression, highly expressed in brain.

Its subcellular location is the cell membrane. The catalysed reaction is L-arginine(in) = L-arginine(out). It carries out the reaction L-lysine(in) = L-lysine(out). The enzyme catalyses L-ornithine(in) = L-ornithine(out). With respect to regulation, inhibited by high potassium ions-induced membrane depolarization. Its function is as follows. Uniporter that mediates the uptake of cationic L-amino acids such as L-arginine, L-lysine and L-ornithine. The transport is sodium ions- and pH-independent, moderately trans-stimulated and is mediated by passive diffusion. The polypeptide is Cationic amino acid transporter 3 (Rattus norvegicus (Rat)).